A 243-amino-acid polypeptide reads, in one-letter code: Probable ubiquitin-conjugating enzyme E2 33 (243 aa).

The UBC core domain occupies alanine 5 to glutamine 162. The Glycyl thioester intermediate role is filled by cysteine 87. The tract at residues glutamate 168–valine 197 is disordered. The segment covering proline 184–valine 197 has biased composition (basic and acidic residues). The chain crosses the membrane as a helical span at residues leucine 220–leucine 240.

It belongs to the ubiquitin-conjugating enzyme family.

Its subcellular location is the membrane. It carries out the reaction S-ubiquitinyl-[E1 ubiquitin-activating enzyme]-L-cysteine + [E2 ubiquitin-conjugating enzyme]-L-cysteine = [E1 ubiquitin-activating enzyme]-L-cysteine + S-ubiquitinyl-[E2 ubiquitin-conjugating enzyme]-L-cysteine.. The protein operates within protein modification; protein ubiquitination. Accepts the ubiquitin from the E1 complex and catalyzes its covalent attachment to other proteins. The polypeptide is Probable ubiquitin-conjugating enzyme E2 33 (UBC33) (Arabidopsis thaliana (Mouse-ear cress)).